Reading from the N-terminus, the 244-residue chain is tRNA (guanine-N(7)-)-methyltransferase (244 aa).

A disordered region spans residues methionine 1 to arginine 24. 4 residues coordinate S-adenosyl-L-methionine: glutamate 74, glutamate 99, aspartate 126, and aspartate 149. The active site involves aspartate 149. Residues lysine 153, aspartate 185, and threonine 222 to glutamate 225 contribute to the substrate site.

The protein belongs to the class I-like SAM-binding methyltransferase superfamily. TrmB family.

The catalysed reaction is guanosine(46) in tRNA + S-adenosyl-L-methionine = N(7)-methylguanosine(46) in tRNA + S-adenosyl-L-homocysteine. The protein operates within tRNA modification; N(7)-methylguanine-tRNA biosynthesis. In terms of biological role, catalyzes the formation of N(7)-methylguanine at position 46 (m7G46) in tRNA. In Pseudomonas savastanoi pv. phaseolicola (strain 1448A / Race 6) (Pseudomonas syringae pv. phaseolicola (strain 1448A / Race 6)), this protein is tRNA (guanine-N(7)-)-methyltransferase.